The following is a 257-amino-acid chain: MNKQRFLFAAKISGIHFLLSFVVALALAGLIFFVWYPFPYQKIMGSFKLFFLISGIDVCCGPLLTFILSNPQKRLKECIIDFSLIIFIQLSAFIYGMYNIYLARPVAVVFELDSIRILSKGDILLDELPQALPEFRQFPYFGHHLLAVRGWKNAEERKEGVEKAFQGFDIAQRPTLWVAYSSELEKIRKAAKPLAQSFSKLNAKQQQDVKTALQKARLNMEEAFFLPLVSNRSMEWMVILDKNMNITTAVEIDAFEL.

The sequence is that of Fimbrial assembly protein, serogroup E1 (fimB) from Dichelobacter nodosus (Bacteroides nodosus).